Consider the following 142-residue polypeptide: Large ribosomal subunit protein uL13 (142 aa).

It belongs to the universal ribosomal protein uL13 family. As to quaternary structure, part of the 50S ribosomal subunit.

Functionally, this protein is one of the early assembly proteins of the 50S ribosomal subunit, although it is not seen to bind rRNA by itself. It is important during the early stages of 50S assembly. This Yersinia enterocolitica serotype O:8 / biotype 1B (strain NCTC 13174 / 8081) protein is Large ribosomal subunit protein uL13.